We begin with the raw amino-acid sequence, 79 residues long: Conotoxin VnMSGL-0122 (79 aa).

The first 20 residues, 1 to 20, serve as a signal peptide directing secretion; it reads MSGLGIMVLALLLLVFMATS. A propeptide spanning residues 21 to 44 is cleaved from the precursor; the sequence is HQDGGGKQATQRDAINVRRRRSIT. Disulfide bonds link Cys52–Cys64, Cys56–Cys73, and Cys63–Cys77. Residue Leu78 is modified to Leucine amide.

It belongs to the conotoxin O3 superfamily. Expressed by the venom duct.

Its subcellular location is the secreted. The sequence is that of Conotoxin VnMSGL-0122 from Conus ventricosus (Mediterranean cone).